Reading from the N-terminus, the 624-residue chain is DNA mismatch repair protein MutL (624 aa).

Basic and acidic residues predominate over residues Asn-340 to His-355. The disordered stretch occupies residues Asn-340–Gln-415. Polar residues-rich tracts occupy residues His-372–Glu-383 and Ser-391–Gln-415.

The protein belongs to the DNA mismatch repair MutL/HexB family.

Its function is as follows. This protein is involved in the repair of mismatches in DNA. It is required for dam-dependent methyl-directed DNA mismatch repair. May act as a 'molecular matchmaker', a protein that promotes the formation of a stable complex between two or more DNA-binding proteins in an ATP-dependent manner without itself being part of a final effector complex. The chain is DNA mismatch repair protein MutL from Shewanella sediminis (strain HAW-EB3).